A 570-amino-acid polypeptide reads, in one-letter code: Peptidyl-prolyl cis-trans isomerase FKBP9 (570 aa).

The signal sequence occupies residues 1-24; that stretch reads MAFRGWRPPPPPLLLLLLWVTGQA. PPIase FKBP-type domains follow at residues 54–142, 166–254, 278–365, and 389–477; these read GDFV…MDIW, SDFV…LDLH, GDFL…IDFH, and GDYL…LELV. N-linked (GlcNAc...) asparagine glycans are attached at residues asparagine 174, asparagine 286, asparagine 302, and asparagine 397. EF-hand domains lie at 488-523 and 533-568; these read WNGEVSPNLFEEIDKDGNGEVLLEEFSEYIHAQVAS and DAELIVKNMFTNQDRNGDGKVTAEEFKLKDQEAKHD. Ca(2+)-binding residues include aspartate 501, aspartate 503, asparagine 505, glutamate 507, glutamate 512, aspartate 546, asparagine 548, aspartate 550, lysine 552, and glutamate 557. Positions 567-570 match the Prevents secretion from ER motif; the sequence is HDEL.

Phosphorylated.

The protein localises to the endoplasmic reticulum. The catalysed reaction is [protein]-peptidylproline (omega=180) = [protein]-peptidylproline (omega=0). With respect to regulation, inhibited by FK506. Functionally, PPIases accelerate the folding of proteins during protein synthesis. This chain is Peptidyl-prolyl cis-trans isomerase FKBP9 (FKBP9), found in Homo sapiens (Human).